Reading from the N-terminus, the 177-residue chain is Nucleoside triphosphate/diphosphate phosphatase (177 aa).

Catalysis depends on Arg-23, which acts as the Proton donor. Mg(2+)-binding residues include Asn-87, Asp-103, Asp-105, Asp-107, Asp-120, and Glu-123.

It belongs to the Ntdp family. Mg(2+) is required as a cofactor.

It catalyses the reaction a ribonucleoside 5'-triphosphate + H2O = a ribonucleoside 5'-diphosphate + phosphate + H(+). It carries out the reaction a ribonucleoside 5'-diphosphate + H2O = a ribonucleoside 5'-phosphate + phosphate + H(+). In terms of biological role, has nucleoside phosphatase activity towards nucleoside triphosphates and nucleoside diphosphates. The polypeptide is Nucleoside triphosphate/diphosphate phosphatase (Streptococcus uberis (strain ATCC BAA-854 / 0140J)).